Consider the following 141-residue polypeptide: Nucleoside triphosphatase NudI (141 aa).

The Nudix hydrolase domain occupies 1–141; it reads MRQRTIVCPL…RHTLRLKGLL (141 aa). Positions 38 to 59 match the Nudix box motif; it reads GGVEPGERIEEALRREIREELG.

It belongs to the Nudix hydrolase family. NudI subfamily. As to quaternary structure, monomer. Mg(2+) is required as a cofactor.

The enzyme catalyses a ribonucleoside 5'-triphosphate + H2O = a ribonucleoside 5'-phosphate + diphosphate + H(+). It carries out the reaction a 2'-deoxyribonucleoside 5'-triphosphate + H2O = a 2'-deoxyribonucleoside 5'-phosphate + diphosphate + H(+). It catalyses the reaction dUTP + H2O = dUMP + diphosphate + H(+). The catalysed reaction is dTTP + H2O = dTMP + diphosphate + H(+). The enzyme catalyses dCTP + H2O = dCMP + diphosphate + H(+). Functionally, catalyzes the hydrolysis of nucleoside triphosphates, with a preference for pyrimidine deoxynucleoside triphosphates (dUTP, dTTP and dCTP). The protein is Nucleoside triphosphatase NudI of Salmonella arizonae (strain ATCC BAA-731 / CDC346-86 / RSK2980).